Consider the following 5085-residue polypeptide: Protein piccolo (5085 aa).

Positions 1 to 20 are enriched in low complexity; that stretch reads MGNEASLEGEGLPEGLAAAA. 2 disordered regions span residues 1 to 142 and 173 to 516; these read MGNE…DFKE and DLIS…TPAQ. Positions 92-101 are enriched in pro residues; the sequence is PGKPPDPGRP. Basic and acidic residues-rich tracts occupy residues 110–121, 132–142, and 184–198; these read RTTDTFRSEQKL, KESKSRTDFKE, and ETTK…EQGK. 2 positions are modified to phosphoserine: Ser211 and Ser231. Polar residues predominate over residues 227-240; that stretch reads QQDSSPKSVSSQQA. Low complexity predominate over residues 253-268; the sequence is PSQQSPAQTPAQQASP. 3 stretches are compositionally biased toward polar residues: residues 275-285, 318-332, and 375-391; these read QPGSAKATVQQ, KTSS…SLAQ, and TPAQ…QQPG. The segment at 372–491 is 12 X 10 AA tandem approximate repeats of P-A-K-P-Q-P-Q-Q-P-X; the sequence is PTKTPAQQSG…LAKPSAQQPT (120 aa). The span at 392 to 408 shows a compositional bias: pro residues; sequence PTKPSPQQPIPAKPQPQ. Residues 409–423 are compositionally biased toward low complexity; sequence QPVATKTQPQQSAPA. Positions 424–472 are enriched in pro residues; the sequence is KPQPQQPAPAKPQPQQPTPAKPQPQPPTPAKPQPQPPTATKPQPQPPTA. Residues 486-499 are compositionally biased toward polar residues; that stretch reads SAQQPTKSISQTVT. The C4-type zinc-finger motif lies at 523–547; the sequence is CPLCNTTELLLHIPEKANFNTCTEC. Disordered regions lie at residues 586-880, 896-1012, 1069-1357, 1373-1604, and 1622-1815; these read AAIP…TVTG, LIST…ACPL, QLGD…PSDL, STLV…EELV, and TIAD…SDPE. Low complexity predominate over residues 596 to 613; that stretch reads PKAATAPTATASKSPVPS. Residues 618–654 show a composition bias toward basic and acidic residues; it reads PKKEPPSKQDSPKALESKKPPEPKKPPEPKKPPEPKK. Residues 672-682 show a composition bias toward low complexity; sequence APQLPVAEALP. Pro residues predominate over residues 683 to 693; sequence EPAPPKEPSGP. Residues 705–717 are compositionally biased toward basic and acidic residues; sequence VEPKQPKMTETRA. Over residues 718–767 the composition is skewed to polar residues; the sequence is DIQSSSTTKPDILSSQVQSQAQVKTASPLKTDSAKPSQSFPPTGEKTTPL. Residues 790–808 are compositionally biased toward basic and acidic residues; the sequence is ESKDPKHIDPIQKKDEPKK. Residues Ser857 and Ser869 each carry the phosphoserine modification. 3 stretches are compositionally biased toward polar residues: residues 867-878, 896-906, and 917-936; these read PKSQPTTPQETV, LISTAGQQGPH, and QAPT…STGQ. Phosphothreonine is present on Thr873. A compositionally biased stretch (basic and acidic residues) spans 990 to 1004; that stretch reads EPEKAVPAHKPDKTT. Residues 1010–1033 form a C4-type zinc finger; the sequence is CPLCRTELNLGSQEPPNFNTCTEC. A compositionally biased stretch (pro residues) spans 1077–1092; that stretch reads PPAPSGPKASPMPAPA. A compositionally biased stretch (basic and acidic residues) spans 1110-1129; it reads KEAEGKTEAEKPVPEKETAS. Thr1133 carries the post-translational modification Phosphothreonine. Composition is skewed to basic and acidic residues over residues 1141 to 1150, 1157 to 1199, and 1274 to 1295; these read QKLEESEGKK, PEKK…KLPP, and SSKD…DKSD. The segment covering 1300–1318 has biased composition (polar residues); that stretch reads QQPKSPQGLSDTGYSSDGI. Phosphoserine occurs at positions 1304, 1314, 1315, 1344, 1346, 1349, 1350, and 1353. A compositionally biased stretch (basic and acidic residues) spans 1331–1345; that stretch reads SDEKDLLKGLKKDSF. The segment covering 1346 to 1355 has biased composition (low complexity); sequence SQESSPSSPS. Residues 1378 to 1396 are compositionally biased toward basic and acidic residues; that stretch reads EKAEKKTQPQKISPEKPQD. Positions 1397–1407 are enriched in polar residues; that stretch reads QQKTQTASETL. Positions 1417–1456 are enriched in basic and acidic residues; the sequence is KESQEKKVSPKKDSEQGFPSRKEHKEKPELVDDLSPRRAS. 9 positions are modified to phosphoserine: Ser1451, Ser1463, Ser1464, Ser1466, Ser1469, Ser1493, Ser1496, Ser1517, and Ser1519. The segment covering 1511 to 1523 has biased composition (acidic residues); sequence SADEDASGSEDEE. Thr1564 carries the phosphothreonine modification. 3 positions are modified to phosphoserine: Ser1565, Ser1575, and Ser1587. A compositionally biased stretch (acidic residues) spans 1578–1587; it reads DEDDETFDES. Over residues 1588–1599 the composition is skewed to basic and acidic residues; it reads PELKFRETKSQE. Positions 1622–1635 are enriched in polar residues; the sequence is TIADKYSSESSQKK. Residues 1640-1650 are compositionally biased toward acidic residues; it reads FDEEPELEMES. Residue Ser1650 is modified to Phosphoserine. Phosphothreonine is present on Thr1652. Residues Ser1654 and Ser1659 each carry the phosphoserine modification. A compositionally biased stretch (polar residues) spans 1662–1679; that stretch reads EGSSSLHASSFTPGTSPT. The span at 1719–1732 shows a compositional bias: acidic residues; sequence DSSEEEELREEEEL. Phosphoserine is present on residues Ser1720 and Ser1721. Positions 1733 to 1746 are enriched in basic and acidic residues; it reads LKEQEKQRELEQQQ. Thr1772 carries the phosphothreonine modification. The residue at position 1778 (Ser1778) is a Phosphoserine. Basic and acidic residues predominate over residues 1787-1802; sequence EELRQAAEMEELHRSS. Phosphoserine occurs at positions 1807, 1812, 1820, and 1841. 3 disordered regions span residues 2116-2139, 2275-2385, and 2456-2486; these read PSES…SSVC, ELTK…PTYP, and KPPI…TGLS. Positions 2121 to 2139 are enriched in low complexity; that stretch reads TSVPPSDTPSLTSSISSVC. The segment covering 2350–2384 has biased composition (pro residues); it reads QPPPPPPPPPPSPSTSSPPPTPPLPPATSPKPPTY. Phosphoserine is present on Ser2511. O-linked (GlcNAc) threonine glycosylation is present at Thr2702. Ser2976 carries O-linked (GlcNAc) serine glycosylation. Thr3014 bears the Phosphothreonine mark. Disordered stretches follow at residues 3350–3457 and 3503–3572; these read KEEK…PLSK and KTYK…LYSP. Ser3374 is subject to Phosphoserine. The span at 3377 to 3386 shows a compositional bias: basic and acidic residues; that stretch reads DDPRNLKKIV. Ser3388 carries the post-translational modification Phosphoserine. 2 positions are modified to phosphothreonine: Thr3392 and Thr3419. Acidic residues predominate over residues 3419–3428; the sequence is TDDEDQDEWD. The segment covering 3511-3523 has biased composition (polar residues); it reads GCQTETDSDTQSP. A phosphoserine mark is found at Ser3522, Ser3530, Ser3561, Ser3565, Ser3571, Ser3574, Ser3577, Ser3598, Ser3624, Ser3626, and Ser3632. 2 disordered regions span residues 3602 to 3695 and 3774 to 3816; these read VLHP…ASRR and AEDR…FIPP. Polar residues-rich tracts occupy residues 3647–3663 and 3679–3691; these read EGFT…SGTQ and STGT…TMGT. Ser3781 is modified (phosphoserine). A compositionally biased stretch (basic and acidic residues) spans 3791 to 3803; that stretch reads SRVESQHGVERPR. The segment covering 3805-3816 has biased composition (polar residues); sequence APQTEFSQFIPP. A phosphoserine mark is found at Ser4034 and Ser4150. Disordered regions lie at residues 4225–4248 and 4272–4291; these read ADKP…YGLD and VSFG…LPIS. Residues 4228–4248 are compositionally biased toward low complexity; the sequence is PYSSGSRSRPSSRPSSVYGLD. Positions 4275 to 4291 are enriched in polar residues; sequence GHSSSSARTKPTSLPIS. 5 positions are modified to phosphoserine: Ser4304, Ser4308, Ser4311, Ser4340, and Ser4376. The disordered stretch occupies residues 4335 to 4357; that stretch reads RDQFGSSHSLPEVQQHMREESRT. The 95-residue stretch at 4442 to 4536 folds into the PDZ domain; the sequence is RVKITRDFKD…EAEICVRLDL (95 aa). The tract at residues 4589–4638 is disordered; it reads VEKGSHAHSGPTSAGSSSVPSPGQPGSPSVSKKKHSSTKPTDGPKAASHP. Residues 4595 to 4618 are compositionally biased toward low complexity; that stretch reads AHSGPTSAGSSSVPSPGQPGSPSV. Ser4609 carries the phosphoserine modification. One can recognise a C2 1 domain in the interval 4639-4768; that stretch reads ITGEIQLQIN…SHLDNTPRWY (130 aa). 2 residues coordinate Ca(2+): Asp4668 and Asp4674. Ser4723 carries the phosphoserine modification. Positions 4738, 4740, 4743, and 4746 each coordinate Ca(2+). Disordered stretches follow at residues 4775-4851 and 4874-4908; these read ESID…SVAQ and QPTK…SEGS. Composition is skewed to low complexity over residues 4783–4795 and 4822–4832; these read HSSQ…PKPS and SSPGSSKSSSE. Residues 4840–4851 show a composition bias toward polar residues; sequence PSRSQSKTSVAQ. Residues 4886–4908 show a composition bias toward low complexity; it reads SSVSTGSSGSSVGSGYSVDSEGS. The 126-residue stretch at 4950-5075 folds into the C2 2 domain; sequence VMGEIKLALK…DLRKRIVNWH (126 aa).

As to quaternary structure, interacts with BSN, ERC2/CAST1, RIMS1 and UNC13A. Interacts (via C-terminus) with TRIO (via N-terminus). Interacts with CTBP1. Interacts with SIAH1; this interaction negatively regulates SIAH1 E3 ligase activity. Directly interacts with GIT1 and GIT2. Requires Ca(2+) as cofactor. Expressed in brain (at protein level).

The protein resides in the presynaptic active zone. In terms of biological role, scaffold protein of the presynaptic cytomatrix at the active zone (CAZ) which is the place in the synapse where neurotransmitter is released. After synthesis, participates in the formation of Golgi-derived membranous organelles termed Piccolo-Bassoon transport vesicles (PTVs) that are transported along axons to sites of nascent synaptic contacts. At the presynaptic active zone, regulates the spatial organization of synaptic vesicle cluster, the protein complexes that execute membrane fusion and compensatory endocytosis. Organizes as well the readily releasable pool of synaptic vesicles and safeguards a fraction of them to be not immediately available for action potential-induced release. Also functions in processes other than assembly such as the regulation of specific presynaptic protein ubiquitination by interacting with SIAH1 or the regulation of presynaptic autophagy. Also mediates synapse to nucleus communication leading to reconfiguration of gene expression by associating with the transcriptional corepressor CTBP1 and by subsequently reducing the size of its pool available for nuclear import. This is Protein piccolo (Pclo) from Rattus norvegicus (Rat).